Reading from the N-terminus, the 318-residue chain is DNA repair nuclease/redox regulator APEX1 (318 aa).

A necessary for interaction with YBX1, binding to RNA, association together with NPM1 to rRNA, endoribonuclease activity on abasic RNA and localization in the nucleoli region spans residues 1-33 (MPKRGKKGAVAEDGDELRTEPEAKKSKTAAKKN). Residues 1-60 (MPKRGKKGAVAEDGDELRTEPEAKKSKTAAKKNDKEAAGEGPALYEDPPDQKTSPSGKPA) form a disordered region. An N6-acetyllysine; by EP300 mark is found at Lys6 and Lys7. The Nuclear localization signal (NLS) motif lies at 8–13 (GAVAED). The span at 16–38 (ELRTEPEAKKSKTAAKKNDKEAA) shows a compositional bias: basic and acidic residues. The interval 23–33 (AKKSKTAAKKN) is necessary for interaction with NPM1 and for efficient rRNA binding. N6-acetyllysine is present on residues Lys27, Lys31, Lys32, and Lys35. The residue at position 54 (Ser54) is a Phosphoserine. Positions 64–80 (ICSWNVDGLRAWIKKKG) match the Nuclear export signal (NES) motif. Cys65 bears the S-nitrosocysteine; alternate mark. Cys65 and Cys93 form a disulfide bridge. Residue Asp70 participates in Mg(2+) binding. Cys93 is subject to S-nitrosocysteine; alternate. Glu96 contributes to the Mg(2+) binding site. Tyr171 is a catalytic residue. At Lys197 the chain carries N6-acetyllysine. 2 residues coordinate Mg(2+): Asp210 and Asn212. Catalysis depends on Asp210, which acts as the Proton donor/acceptor. Thr233 is subject to Phosphothreonine; by CDK5. Residues 289–318 (HSLLPALCDSKIRSKALGSDHCPITLYLAL) form a mitochondrial targeting sequence (MTS) region. Residue Asp308 coordinates Mg(2+). An S-nitrosocysteine modification is found at Cys310.

This sequence belongs to the DNA repair enzymes AP/ExoA family. In terms of assembly, monomer. Homodimer; disulfide-linked. Component of the SET complex, composed of at least APEX1, SET, ANP32A, HMGB2, NME1 and TREX1. Associates with the dimer XRCC5/XRCC6 in a DNA-dependent manner. Interacts with SIRT1; the interaction is increased in the context of genotoxic stress. Interacts with HDAC1, HDAC2 and HDAC3; the interactions are not dependent on the APEX1 acetylation status. Interacts with XRCC1; the interaction is induced by SIRT1 and increased with the APEX1 acetylated form. Interacts with NPM1 (via N-terminal domain); the interaction is RNA-dependent and decreases in hydrogen peroxide-damaged cells. Interacts (via N-terminus) with YBX1 (via C-terminus); the interaction is increased in presence of APEX1 acetylated at Lys-6 and Lys-7. Interacts with HNRNPL; the interaction is DNA-dependent. Interacts (via N-terminus) with KPNA1 and KPNA2. Interacts with TXN; the interaction stimulates the FOS/JUN AP-1 complex DNA-binding activity in a redox-dependent manner. Interacts with GZMA, KRT8, MDM2, POLB, PRDX6, PRPF19, RPLP0, TOMM20 and WDR77. Binds to CDK5. Mg(2+) serves as cofactor. Mn(2+) is required as a cofactor. Phosphorylated. Phosphorylation by kinase PKC or casein kinase CK2 results in enhanced redox activity that stimulates binding of the FOS/JUN AP-1 complex to its cognate binding site. AP-endodeoxyribonuclease activity is not affected by CK2-mediated phosphorylation. Phosphorylation of Thr-233 by CDK5 in response to MPP(+)/MPTP (1-methyl-4-phenylpyridinium) reduces AP-endodeoxyribonuclease activity resulting in accumulation of DNA damage and contributing to neuronal death. In terms of processing, acetylated on Lys-6 and Lys-7. Acetylation is increased by the transcriptional coactivator EP300 acetyltransferase, genotoxic agents like H(2)O(2) and methyl methanesulfonate (MMS). Acetylation increases its binding affinity to the negative calcium response element (nCaRE) DNA promoter. The acetylated form induces a stronger binding of YBX1 to the Y-box sequence in the MDR1 promoter than the unacetylated form. Deacetylated on lysines. Lys-6 and Lys-7 are deacetylated by SIRT1. Post-translationally, cleaved at Lys-31 by granzyme A to create the mitochondrial form; leading in reduction of binding to DNA, AP endodeoxyribonuclease activity, redox activation of transcription factors and to enhanced cell death. Cleaved by granzyme K; leading to intracellular ROS accumulation and enhanced cell death after oxidative stress. Cys-69 and Cys-93 are nitrosylated in response to nitric oxide (NO) and lead to the exposure of the nuclear export signal (NES). In terms of processing, ubiquitinated by MDM2; leading to translocation to the cytoplasm and proteasomal degradation.

The protein localises to the nucleus. Its subcellular location is the nucleolus. The protein resides in the nucleus speckle. It localises to the endoplasmic reticulum. It is found in the cytoplasm. The protein localises to the mitochondrion. The enzyme catalyses a deoxyribonucleotide-2'-deoxyribose-5'-monophosphate-DNA + H2O = a 5'-end 2'-deoxyribose-5'-monophosphate-DNA + a 3'-end 2'-deoxyribonucleotide-DNA + H(+). It catalyses the reaction Exonucleolytic cleavage in the 3'- to 5'-direction to yield nucleoside 5'-phosphates.. It carries out the reaction a 3'-end 2'-deoxyribonucleotide-3'-phosphoglycolate-DNA + H2O = 2-phosphoglycolate + a 3'-end 2'-deoxyribonucleotide-DNA + H(+). The catalysed reaction is a 3'-end 2'-deoxyribonucleotide-8-oxoguanine-DNA + H2O = 8-oxo-dGMP + a 3'-end 2'-deoxyribonucleotide-DNA + H(+). With respect to regulation, NPM1 stimulates endodeoxyribonuclease activity on double-stranded DNA with AP sites, but inhibits endoribonuclease activity on single-stranded RNA containing AP sites. Functionally, multifunctional protein that plays a central role in the cellular response to oxidative stress. The two major activities of APEX1 are DNA repair and redox regulation of transcriptional factors. Functions as an apurinic/apyrimidinic (AP) endodeoxyribonuclease in the base excision repair (BER) pathway of DNA lesions induced by oxidative and alkylating agents. Initiates repair of AP sites in DNA by catalyzing hydrolytic incision of the phosphodiester backbone immediately adjacent to the damage, generating a single-strand break with 5'-deoxyribose phosphate and 3'-hydroxyl ends. Also incises at AP sites in the DNA strand of DNA/RNA hybrids, single-stranded DNA regions of R-loop structures, and single-stranded RNA molecules. Operates at switch sites of immunoglobulin (Ig) constant regions where it mediates Ig isotype class switch recombination. Processes AP sites induced by successive action of AICDA and UNG. Generates staggered nicks in opposite DNA strands resulting in the formation of double-strand DNA breaks that are finally resolved via non-homologous end joining repair pathway. Has 3'-5' exodeoxyribonuclease activity on mismatched deoxyribonucleotides at the 3' termini of nicked or gapped DNA molecules during short-patch BER. Possesses DNA 3' phosphodiesterase activity capable of removing lesions (such as phosphoglycolate and 8-oxoguanine) blocking the 3' side of DNA strand breaks. Also acts as an endoribonuclease involved in the control of single-stranded RNA metabolism. Plays a role in regulating MYC mRNA turnover by preferentially cleaving in between UA and CA dinucleotides of the MYC coding region determinant (CRD). In association with NMD1, plays a role in the rRNA quality control process during cell cycle progression. Acts as a loading factor for POLB onto non-incised AP sites in DNA and stimulates the 5'-terminal deoxyribose 5'-phosphate (dRp) excision activity of POLB. Exerts reversible nuclear redox activity to regulate DNA binding affinity and transcriptional activity of transcriptional factors by controlling the redox status of their DNA-binding domain, such as the FOS/JUN AP-1 complex after exposure to IR. Involved in calcium-dependent down-regulation of parathyroid hormone (PTH) expression by binding to negative calcium response elements (nCaREs). Together with HNRNPL or the dimer XRCC5/XRCC6, associates with nCaRE, acting as an activator of transcriptional repression. May also play a role in the epigenetic regulation of gene expression by participating in DNA demethylation. Stimulates the YBX1-mediated MDR1 promoter activity, when acetylated at Lys-6 and Lys-7, leading to drug resistance. Plays a role in protection from granzyme-mediated cellular repair leading to cell death. Binds DNA and RNA. Associates, together with YBX1, on the MDR1 promoter. Together with NPM1, associates with rRNA. This is DNA repair nuclease/redox regulator APEX1 (APEX1) from Pan paniscus (Pygmy chimpanzee).